The following is a 213-amino-acid chain: 3-oxoadipate CoA-transferase subunit B (213 aa).

The active site involves E50.

It belongs to the 3-oxoacid CoA-transferase subunit B family. As to quaternary structure, heterodimer.

It catalyses the reaction 3-oxoadipate + succinyl-CoA = 3-oxoadipyl-CoA + succinate. It participates in aromatic compound metabolism; beta-ketoadipate pathway; acetyl-CoA and succinyl-CoA from 3-oxoadipate: step 1/2. The chain is 3-oxoadipate CoA-transferase subunit B (pcaJ) from Pseudomonas putida (strain ATCC 47054 / DSM 6125 / CFBP 8728 / NCIMB 11950 / KT2440).